Here is a 182-residue protein sequence, read N- to C-terminus: Ribosome-recycling factor (182 aa).

Positions 136-156 (VKKQEKDGDFSEDQSRDEQDS) are disordered.

This sequence belongs to the RRF family.

Its subcellular location is the cytoplasm. In terms of biological role, responsible for the release of ribosomes from messenger RNA at the termination of protein biosynthesis. May increase the efficiency of translation by recycling ribosomes from one round of translation to another. The sequence is that of Ribosome-recycling factor from Synechococcus sp. (strain CC9902).